The following is a 54-amino-acid chain: MKVNCKGYPTKFCFGKPLPHCASDGKTYPNRCRFCNAFVKSHGLITLRYYGKCK.

Residues 1 to 54 (MKVNCKGYPTKFCFGKPLPHCASDGKTYPNRCRFCNAFVKSHGLITLRYYGKCK) form the Kazal-like domain. 3 disulfides stabilise this stretch: Cys5/Cys35, Cys13/Cys32, and Cys21/Cys53.

As to quaternary structure, may form disulfide-linked dimers or trimers (in vitro). As to expression, expressed by the venom gland.

Its subcellular location is the secreted. Functionally, partially inhibits trypsin in vitro at slightly acidic pH and concentrations in excess of 0.3 mM. Has no protease inhibitory activity at neutral or basic pH. Has no antibacterial activity. Shows no toxicity in vertebrates apart from transient paw edema in mouse. The protein is Kazal-type inhibitor-like protein of Bothriechis schlegelii (Eyelash palm pitviper).